The primary structure comprises 68 residues: C-hordein (68 aa).

Pro residues-rich tracts occupy residues 1–24 and 33–55; these read YPQQ…PQQP and PQQP…PLQP. The tract at residues 1-68 is disordered; the sequence is YPQQPQPFPQ…YTQQTIWSMV (68 aa). Residues 59 to 68 are compositionally biased toward polar residues; it reads YTQQTIWSMV.

In terms of tissue distribution, developing endosperm.

Functionally, sulfur-poor seed storage protein. The protein is C-hordein of Hordeum vulgare (Barley).